A 196-amino-acid polypeptide reads, in one-letter code: Purpurin (196 aa).

The first 21 residues, M1 to A21, serve as a signal peptide directing secretion. 3 cysteine pairs are disulfide-bonded: C24–C182, C90–C196, and C142–C151.

It belongs to the calycin superfamily. Lipocalin family.

Its subcellular location is the secreted. It is found in the extracellular space. The protein resides in the extracellular matrix. The protein localises to the interphotoreceptor matrix. In terms of biological role, may be involved in the transport of retinol between the photoreceptors and the pigmented epithelium. The chain is Purpurin from Gallus gallus (Chicken).